We begin with the raw amino-acid sequence, 499 residues long: Glutelin type-A 2 (499 aa).

A signal peptide spans 1–24; it reads MASINRPIVFFTVCLFLLCDGSLA. Disulfide bonds link Cys-46–Cys-79 and Cys-122–Cys-313. The 198-residue stretch at 51 to 248 folds into the Cupin type-1 1 domain; the sequence is LQAFEPIRSV…AFGISNQVAR (198 aa). Residues 280-300 form a disordered region; sequence EQGQMQSREHYQEGGYQQSQY. One can recognise a Cupin type-1 2 domain in the interval 319–468; sequence QNIDNPNRAD…AYRISREEAQ (150 aa).

The protein belongs to the 11S seed storage protein (globulins) family. In terms of assembly, hexamer; each subunit is composed of an acidic and a basic chain derived from a single precursor and linked by a disulfide bond.

Its function is as follows. Seed storage protein. The protein is Glutelin type-A 2 (GLUA2) of Oryza sativa subsp. japonica (Rice).